The following is a 394-amino-acid chain: Elongation factor Tu (394 aa).

The 195-residue stretch at 10 to 204 (KPHVNVGTIG…ALDNYIPEPE (195 aa)) folds into the tr-type G domain. Positions 19-26 (GHVDHGKT) are G1. 19 to 26 (GHVDHGKT) serves as a coordination point for GTP. Threonine 26 is a Mg(2+) binding site. A G2 region spans residues 60–64 (GITIS). Residues 81–84 (DCPG) form a G3 region. GTP-binding positions include 81–85 (DCPGH) and 136–139 (NKCD). The G4 stretch occupies residues 136–139 (NKCD). The tract at residues 174 to 176 (SAL) is G5.

The protein belongs to the TRAFAC class translation factor GTPase superfamily. Classic translation factor GTPase family. EF-Tu/EF-1A subfamily. Monomer.

Its subcellular location is the cytoplasm. The catalysed reaction is GTP + H2O = GDP + phosphate + H(+). Functionally, GTP hydrolase that promotes the GTP-dependent binding of aminoacyl-tRNA to the A-site of ribosomes during protein biosynthesis. The sequence is that of Elongation factor Tu from Idiomarina loihiensis (strain ATCC BAA-735 / DSM 15497 / L2-TR).